The chain runs to 200 residues: Ras-related protein Rab-10 (200 aa).

Residues Ser18, Gly19, Val20, Gly21, Lys22, Thr23, Cys24, Asn35, Thr36, Ser40, and Thr41 each contribute to the GTP site. Residue Thr23 participates in Mg(2+) binding. Short sequence motifs (switch) lie at residues 32 to 46 (DAFN…EIDF) and 64 to 81 (DTAG…YYRG). Mg(2+)-binding residues include Thr41 and Asp64. Position 67 (Gly67) interacts with GTP. Residue Thr73 is modified to Phosphothreonine. Lys102 bears the N6-acetyllysine mark. Lys102 participates in a covalent cross-link: Glycyl lysine isopeptide (Lys-Gly) (interchain with G-Cter in ubiquitin). The GTP site is built by Asn122, Lys123, Asp125, and Met126. Lys136 is covalently cross-linked (Glycyl lysine isopeptide (Lys-Gly) (interchain with G-Cter in ubiquitin)). 3 residues coordinate GTP: Ser152, Ala153, and Lys154. Residue Lys154 forms a Glycyl lysine isopeptide (Lys-Gly) (interchain with G-Cter in ubiquitin) linkage. S-geranylgeranyl cysteine attachment occurs at residues Cys199 and Cys200.

Belongs to the small GTPase superfamily. Rab family. In terms of assembly, interacts with MYO5A; mediates the transport to the plasma membrane of SLC2A4/GLUT4 storage vesicles. Interacts with GDI1 and with GDI2; negatively regulates RAB10 association with membranes and activation. Interacts (GDP-bound form) with LLGL1; the interaction is direct and promotes RAB10 association with membranes and activation through competition with the Rab inhibitor GDI1. Interacts with EXOC4; probably associates with the exocyst. Interacts (GTP-bound form) with MICALCL, MICAL1, MICAL3, EHBP1 and EHBP1L1; at least in case of MICAL1 two molecules of RAB10 can bind to one molecule of MICAL1. Interacts with TBC1D13. Interacts with SEC16A. Interacts with CHM. Interacts with LRRK2; interaction facilitates phosphorylation of Thr-73. Interacts with RILPL1 and RILPL2 when phosphorylated on Thr-73. Interacts with TBC1D21. Interacts with MARCKS. It depends on Mg(2+) as a cofactor. In terms of processing, phosphorylation of Thr-73 in the switch II region by LRRK2 prevents the association of RAB regulatory proteins, including CHM and RAB GDP dissociation inhibitors GDI1 and GDI2. Phosphorylation of Thr-73 by LRRK2 is stimulated by RAB29 and RAB32. Phosphorylation by LRRK2 is required for localization to stressed lysosomes. Highest levels in neural and muscle tissues.

The protein resides in the cytoplasmic vesicle membrane. It localises to the golgi apparatus. It is found in the trans-Golgi network membrane. Its subcellular location is the endosome membrane. The protein localises to the recycling endosome membrane. The protein resides in the cytoplasmic vesicle. It localises to the phagosome membrane. It is found in the cell projection. Its subcellular location is the cilium. The protein localises to the endoplasmic reticulum membrane. The protein resides in the cytoplasm. It localises to the perinuclear region. It is found in the lysosome. The enzyme catalyses GTP + H2O = GDP + phosphate + H(+). With respect to regulation, regulated by guanine nucleotide exchange factors (GEFs) DENND4C and RABIF which promote the exchange of bound GDP for free GTP. Regulated by GTPase activating proteins (GAPs) including TBC1D21 which increase the GTP hydrolysis activity. Inhibited by GDP dissociation inhibitors GDI1 and GDI2 which prevent Rab-GDP dissociation. In terms of biological role, the small GTPases Rab are key regulators of intracellular membrane trafficking, from the formation of transport vesicles to their fusion with membranes. Rabs cycle between an inactive GDP-bound form and an active GTP-bound form that is able to recruit to membranes different set of downstream effectors directly responsible for vesicle formation, movement, tethering and fusion. That Rab is mainly involved in the biosynthetic transport of proteins from the Golgi to the plasma membrane. Regulates, for instance, SLC2A4/GLUT4 glucose transporter-enriched vesicles delivery to the plasma membrane. In parallel, it regulates the transport of TLR4, a toll-like receptor to the plasma membrane and therefore may be important for innate immune response. Also plays a specific role in asymmetric protein transport to the plasma membrane. In neurons, it is involved in axonogenesis through regulation of vesicular membrane trafficking toward the axonal plasma membrane. In epithelial cells, it regulates transport from the Golgi to the basolateral membrane. May play a role in the basolateral recycling pathway and in phagosome maturation. May play a role in endoplasmic reticulum dynamics and morphology controlling tubulation along microtubules and tubules fusion. Together with LRRK2, RAB8A, and RILPL1, it regulates ciliogenesis. When phosphorylated by LRRK2 on Thr-73, it binds RILPL1 and inhibits ciliogenesis. Participates in the export of a subset of neosynthesized proteins through a Rab8-Rab10-Rab11-dependent endososomal export route. Targeted to and stabilized on stressed lysosomes through LRRK2 phosphorylation where it promotes the extracellular release of lysosomal content through EHBP1 and EHNP1L1 effector proteins. This is Ras-related protein Rab-10 from Rattus norvegicus (Rat).